A 493-amino-acid polypeptide reads, in one-letter code: Protein translocase subunit SecY (493 aa).

Over 1-21 (MDSVIRALQPYFERIPSVERP) the chain is Cytoplasmic. The helical transmembrane segment at 22 to 48 (KGHVHFREKFGWTAAILLLYFILSNVP) threads the bilayer. The Extracellular segment spans residues 49 to 59 (VFGLSPESIDI). The helical intramembrane region spans 60–67 (FAAYRALF). Residues 60–88 (FAAYRALFAGSTGSIIALGIGPIVTASII) traverse the membrane as a discontinuously helical segment. The stretch at 68 to 79 (AGSTGSIIALGI) is an intramembrane region. Positions 80-88 (GPIVTASII) form an intramembrane region, helical. The Cytoplasmic segment spans residues 89–109 (LQLLVGAGIIKLDLTNPEDRA). Residues 110–134 (AYQDFQRFLVFVMIAVEAIPQIAGG) form a helical membrane-spanning segment. Residues 135-151 (LLKPDLNLAAQLGVSPG) lie on the Extracellular side of the membrane. A helical membrane pass occupies residues 152 to 176 (IISFLIFIQLFIGGVLIVYMDEVVS). Residues 177-182 (KWGIGS) are Cytoplasmic-facing. The helical transmembrane segment at 183–201 (GVSLFILAGIAQSIVVGLF) threads the bilayer. At 202–244 (NWVIPPNSAMPAGIIPRWIWIAQNYPLDQLFTGSGLAFLLIQG) the chain is on the extracellular side. A helical transmembrane segment spans residues 245 to 266 (GILALITTAAIILLVVFFEGTR). Residues 267 to 291 (VEIPLAHAVARGARGRFPIKLIYAS) lie on the Cytoplasmic side of the membrane. The chain crosses the membrane as a helical span at residues 292-313 (VLPMIFVRALQANVVALGQVLH). Topologically, residues 314-367 (ARGVTIFGEFVNGKAVSGLMFFLQPVSSPYDWIPSLVKSQGAAFAAIPDWMIYL) are extracellular. Residues 368–387 (HLLIDALILVVGGIIFAWFW) traverse the membrane as a helical segment. At 388 to 430 (VETSGMDARTVASQIAKSGMQVPGFRKSPQVLERVLSRYIPKV) the chain is on the cytoplasmic side. Residues 431 to 449 (TILGGAIIGILTLVANMLG) form a helical membrane-spanning segment. Residues 450–454 (TIGNV) are Extracellular-facing. The chain crosses the membrane as a helical span at residues 455 to 469 (SGTGLLLAVSIAYRF). Residues 470 to 493 (YEDLAKEQLTEMHPLIRRMLGEEA) are Cytoplasmic-facing.

Belongs to the SecY/SEC61-alpha family. In terms of assembly, component of the Sec protein translocase complex. Heterotrimer consisting of alpha (SecY), beta (SecG) and gamma (SecE) subunits. The heterotrimers can form oligomers, although 1 heterotrimer is thought to be able to translocate proteins. Interacts with the ribosome. May interact with SecDF, and other proteins may be involved.

It localises to the cell membrane. Functionally, the central subunit of the protein translocation channel SecYEG. Consists of two halves formed by TMs 1-5 and 6-10. These two domains form a lateral gate at the front which open onto the bilayer between TMs 2 and 7, and are clamped together by SecE at the back. The channel is closed by both a pore ring composed of hydrophobic SecY resides and a short helix (helix 2A) on the extracellular side of the membrane which forms a plug. The plug probably moves laterally to allow the channel to open. The ring and the pore may move independently. The protein is Protein translocase subunit SecY of Archaeoglobus fulgidus (strain ATCC 49558 / DSM 4304 / JCM 9628 / NBRC 100126 / VC-16).